The sequence spans 328 residues: N-acetyl-gamma-glutamyl-phosphate reductase (328 aa).

C143 is an active-site residue.

This sequence belongs to the NAGSA dehydrogenase family. Type 1 subfamily.

It localises to the cytoplasm. The catalysed reaction is N-acetyl-L-glutamate 5-semialdehyde + phosphate + NADP(+) = N-acetyl-L-glutamyl 5-phosphate + NADPH + H(+). The protein operates within amino-acid biosynthesis; L-arginine biosynthesis; N(2)-acetyl-L-ornithine from L-glutamate: step 3/4. In terms of biological role, catalyzes the NADPH-dependent reduction of N-acetyl-5-glutamyl phosphate to yield N-acetyl-L-glutamate 5-semialdehyde. This chain is N-acetyl-gamma-glutamyl-phosphate reductase, found in Methanosphaerula palustris (strain ATCC BAA-1556 / DSM 19958 / E1-9c).